The sequence spans 87 residues: UPF0367 protein P9303_26451 (87 aa).

The protein belongs to the UPF0367 family.

This Prochlorococcus marinus (strain MIT 9303) protein is UPF0367 protein P9303_26451.